Here is a 156-residue protein sequence, read N- to C-terminus: Cyclic pyranopterin monophosphate synthase (156 aa).

Substrate contacts are provided by residues 75–77 and 111–112; these read LCH and ME. The active site involves Asp-126.

This sequence belongs to the MoaC family. Homohexamer; trimer of dimers.

It catalyses the reaction (8S)-3',8-cyclo-7,8-dihydroguanosine 5'-triphosphate = cyclic pyranopterin phosphate + diphosphate. It functions in the pathway cofactor biosynthesis; molybdopterin biosynthesis. Catalyzes the conversion of (8S)-3',8-cyclo-7,8-dihydroguanosine 5'-triphosphate to cyclic pyranopterin monophosphate (cPMP). This Erythrobacter litoralis (strain HTCC2594) protein is Cyclic pyranopterin monophosphate synthase.